Reading from the N-terminus, the 185-residue chain is Ribosome-recycling factor (185 aa).

It belongs to the RRF family.

Its subcellular location is the cytoplasm. In terms of biological role, responsible for the release of ribosomes from messenger RNA at the termination of protein biosynthesis. May increase the efficiency of translation by recycling ribosomes from one round of translation to another. This is Ribosome-recycling factor from Kineococcus radiotolerans (strain ATCC BAA-149 / DSM 14245 / SRS30216).